The primary structure comprises 703 residues: Zinc finger protein 750 (703 aa).

The segment at 25 to 51 (YKCFQCPFTCNEKSHLFNHMKYGLCKN) adopts a CCHC-type zinc-finger fold. Zn(2+) contacts are provided by C27, C30, H43, and C49. Disordered stretches follow at residues 60 to 96 (DRVPKCSKPNSSDPKQTNQPDPVVKPTSSKPVPSGLS), 121 to 147 (GPHRCLGQKPTPHKEAAPPSPAPEAAV), 362 to 617 (PSKL…EQKQ), and 633 to 703 (NVEP…TRVS). Polar residues predominate over residues 67-78 (KPNSSDPKQTNQ). Positions 79 to 93 (PDPVVKPTSSKPVPS) are enriched in low complexity. Residues 375 to 399 (TELEKQSPTPEAKEPSKDGQRDTEG) are compositionally biased toward basic and acidic residues. Residues 418 to 428 (SPTNFTQTSQP) show a composition bias toward polar residues. The span at 583–592 (SSGDGPDPSS) shows a compositional bias: low complexity. The span at 605–616 (QDIRAADSDEQK) shows a compositional bias: basic and acidic residues.

It is found in the nucleus. Its function is as follows. Transcription factor involved in epidermis differentiation. Required for terminal epidermal differentiation: acts downstream of p63/TP63 and activates expression of late epidermal differentiation genes. Specifically binds to the promoter of KLF4 and promotes its expression. The polypeptide is Zinc finger protein 750 (ZNF750) (Bos taurus (Bovine)).